We begin with the raw amino-acid sequence, 610 residues long: Modifier of mdg4 (610 aa).

The segment at Met1–Lys160 is self-association. The interval Met1 to Met308 is interaction with Chi. The region spanning Val32–Gln98 is the BTB domain. Disordered stretches follow at residues Gly115–Ser156, Val219–Thr259, Pro311–Tyr339, and Glu386–Lys432. The span at Ala122–Ala135 shows a compositional bias: pro residues. Positions Pro136 to Ser156 are enriched in low complexity. Residues Asn222–Ala238 show a composition bias toward polar residues. Ser230 carries the phosphoserine modification. A compositionally biased stretch (basic and acidic residues) spans Thr312–Ala325. Residues Glu386–Glu400 show a composition bias toward polar residues. Low complexity predominate over residues Ala401 to Thr410. A compositionally biased stretch (basic and acidic residues) spans Thr422–Lys432. The segment at Tyr452–His512 adopts an FLYWCH-type zinc-finger fold. The segment at Leu551–Lys610 is interaction with su(Hw). Positions Ile567–Glu577 are enriched in acidic residues. The disordered stretch occupies residues Ile567 to Glu595. Positions Pro578–Glu595 are enriched in basic and acidic residues.

In terms of assembly, can self-associate. Interacts with Chi. Interacts with Top2. Isoform mod2.2: Component of the gypsy chromatin insulator complex, composed of Cp190, mod(mdg4) and su(Hw). The gypsy chromatin insulator complex interacts with Topors via mod(mdg4) and su(Hw). Isoform mod2.2 interacts with Trl/GAGA and interaction with this protein may bypass the repressive effects of the su(Hw) insulator.

The protein localises to the nucleus. It localises to the chromosome. In terms of biological role, component of the gypsy chromatin insulator complex which is required for the function of the gypsy chromatin insulator and other endogenous chromatin insulators. Chromatin insulators are regulatory elements which establish independent domains of transcriptional activity within eukaryotic genomes. Insulators have two defining properties; they can block the communication between an enhancer and a promoter when placed between them and can also buffer transgenes from position effect variegation (PEV). Insulators are proposed to structure the chromatin fiber into independent domains of differing transcriptional potential by promoting the formation of distinct chromatin loops. This chromatin looping may involve the formation of insulator bodies, where homotypic interactions between individual subunits of the insulator complex could promote the clustering of widely spaced insulators at the nuclear periphery. Within the gypsy insulator complex, this protein may control the nature of the repressive effect of su(Hw): in the absence of mod(mdg4) protein, su(Hw) exerts a bidirectional silencing effect, whereas in the presence of mod(mdg4), the silencing effect is unidirectional. Isoform H is specifically required to maintain the pairing of achiasmate homologs in male meiosis I which is mediated by the rDNA repeats on the achiasmate X-Y bivalents. Isoform H also plays a role in apoptotic regulatory pathways. The chain is Modifier of mdg4 from Drosophila melanogaster (Fruit fly).